We begin with the raw amino-acid sequence, 191 residues long: Protein GrpE (191 aa).

This sequence belongs to the GrpE family. In terms of assembly, homodimer.

Its subcellular location is the cytoplasm. Functionally, participates actively in the response to hyperosmotic and heat shock by preventing the aggregation of stress-denatured proteins, in association with DnaK and GrpE. It is the nucleotide exchange factor for DnaK and may function as a thermosensor. Unfolded proteins bind initially to DnaJ; upon interaction with the DnaJ-bound protein, DnaK hydrolyzes its bound ATP, resulting in the formation of a stable complex. GrpE releases ADP from DnaK; ATP binding to DnaK triggers the release of the substrate protein, thus completing the reaction cycle. Several rounds of ATP-dependent interactions between DnaJ, DnaK and GrpE are required for fully efficient folding. The polypeptide is Protein GrpE (Nitratidesulfovibrio vulgaris (strain ATCC 29579 / DSM 644 / CCUG 34227 / NCIMB 8303 / VKM B-1760 / Hildenborough) (Desulfovibrio vulgaris)).